Here is a 1335-residue protein sequence, read N- to C-terminus: Mediator of RNA polymerase II transcription subunit 15a (1335 aa).

8 disordered regions span residues 1 to 27, 109 to 172, 190 to 225, 241 to 389, 401 to 448, 496 to 525, 567 to 591, and 683 to 815; these read MDNNNWRPSLPNGEPAMDTGDWRTQLP, GTSI…NNNT, QDSSGQHGLSSNMFSGPQRQMLGRPHAMSSQQQQQP, FQSG…QHQQ, IQQQ…TQSN, LYSSQGQQSQNQPSQQQMMPQLQSHHQQLG, SQRTLPEMPSSSLDSTAQTESANGG, and HRPR…QSNV. Composition is skewed to polar residues over residues 110 to 158, 190 to 207, and 241 to 257; these read TSID…TALP, QDSSGQHGLSSNMFSGPQ, and FQSGNVPNPNSLLPSHI. The span at 258–270 shows a compositional bias: low complexity; sequence QQQQQNVLQPNQL. Polar residues predominate over residues 271–299; it reads HSSQQPGVPTSATQPSTVNSAPLQGLHTN. Residues 300–314 are compositionally biased toward low complexity; sequence QQSSPQLSSQQTTQS. Residues 315–328 show a composition bias toward polar residues; that stretch reads MLRQHQSSMLRQHP. Over residues 329 to 362 the composition is skewed to low complexity; the sequence is QSQQASGIHQQQSSLPQQSISPLQQQPTQLMRQQ. Over residues 363 to 374 the composition is skewed to polar residues; it reads AANSSGIQQKQM. A compositionally biased stretch (low complexity) spans 401–436; the sequence is IQQQQSQQQPLQQPQQQQKQQPPAQQQLMSQQNSLQ. The segment covering 437–448 has biased composition (polar residues); the sequence is ATHQNPLGTQSN. Over residues 498 to 525 the composition is skewed to low complexity; that stretch reads SSQGQQSQNQPSQQQMMPQLQSHHQQLG. Residues 567–588 show a composition bias toward polar residues; sequence SQRTLPEMPSSSLDSTAQTESA. A compositionally biased stretch (low complexity) spans 688 to 712; the sequence is PVQQGQLPQSQMQPMQQPQSQTVQD. 3 stretches are compositionally biased toward polar residues: residues 716–728, 735–749, and 756–815; these read DNQTNPQMQSMSM, AQQSSMTNMQSNVLS, and APQQ…QSNV. Positions 834-882 form a coiled coil; that stretch reads QDQQMQLKQQFQQRQMQQQQLQARQQQQQQQLQARQQAAQLQQMNDMND. Disordered stretches follow at residues 947 to 986 and 1146 to 1165; these read KMGTPLQPANSPFVVPSPSSTPLAPSPMQVDSEKPGSSSL and FAGSETSDLESTATSDGKKA. The span at 957–973 shows a compositional bias: low complexity; that stretch reads SPFVVPSPSSTPLAPSP. A compositionally biased stretch (polar residues) spans 1148–1160; sequence GSETSDLESTATS.

Belongs to the plant Mediator complex subunit 15 family. As to quaternary structure, component of the Mediator complex.

It localises to the nucleus. In terms of biological role, component of the Mediator complex, a coactivator involved in the regulated transcription of nearly all RNA polymerase II-dependent genes. Mediator functions as a bridge to convey information from gene-specific regulatory proteins to the basal RNA polymerase II transcription machinery. The Mediator complex, having a compact conformation in its free form, is recruited to promoters by direct interactions with regulatory proteins and serves for the assembly of a functional preinitiation complex with RNA polymerase II and the general transcription factors. The protein is Mediator of RNA polymerase II transcription subunit 15a (MED15A) of Arabidopsis thaliana (Mouse-ear cress).